The sequence spans 616 residues: Chaperone protein HscA (616 aa).

The protein belongs to the heat shock protein 70 family.

Functionally, chaperone involved in the maturation of iron-sulfur cluster-containing proteins. Has a low intrinsic ATPase activity which is markedly stimulated by HscB. Involved in the maturation of IscU. This chain is Chaperone protein HscA, found in Salmonella heidelberg (strain SL476).